A 64-amino-acid polypeptide reads, in one-letter code: MAHPKRKISKTRRDKRRTHYKATVAQIATCPITGEAHLYHRAYWHEGKMYYRGQVVIDKQTAVA.

Belongs to the bacterial ribosomal protein bL32 family.

This chain is Large ribosomal subunit protein bL32, found in Flavobacterium psychrophilum (strain ATCC 49511 / DSM 21280 / CIP 103535 / JIP02/86).